A 382-amino-acid polypeptide reads, in one-letter code: Lipid-A-disaccharide synthase (382 aa).

It belongs to the LpxB family.

It catalyses the reaction 2-N,3-O-bis[(3R)-3-hydroxytetradecanoyl]-alpha-D-glucosaminyl 1-phosphate + UDP-2-N,3-O-bis[(3R)-3-hydroxytetradecanoyl]-alpha-D-glucosamine = lipid A disaccharide (E. coli) + UDP + H(+). The catalysed reaction is a lipid X + a UDP-2-N,3-O-bis[(3R)-3-hydroxyacyl]-alpha-D-glucosamine = a lipid A disaccharide + UDP + H(+). The protein operates within glycolipid biosynthesis; lipid IV(A) biosynthesis; lipid IV(A) from (3R)-3-hydroxytetradecanoyl-[acyl-carrier-protein] and UDP-N-acetyl-alpha-D-glucosamine: step 5/6. Its function is as follows. Condensation of UDP-2,3-diacylglucosamine and 2,3-diacylglucosamine-1-phosphate to form lipid A disaccharide, a precursor of lipid A, a phosphorylated glycolipid that anchors the lipopolysaccharide to the outer membrane of the cell. In Shigella boydii serotype 18 (strain CDC 3083-94 / BS512), this protein is Lipid-A-disaccharide synthase.